The chain runs to 429 residues: CBL-interacting serine/threonine-protein kinase 7 (429 aa).

The 256-residue stretch at 25-280 folds into the Protein kinase domain; sequence YELGRRLGSG…IETVMKTNWF (256 aa). ATP is bound by residues 31-39 and Lys54; that span reads LGSGSFAKV. Catalysis depends on Asp149, which acts as the Proton acceptor. Residues 167 to 195 are activation loop; it reads DFGLSALPEHLQNGLLHTACGTPAYTAPE. Ser171 carries the post-translational modification Phosphoserine. Thr184 is modified (phosphothreonine). An NAF domain is found at 302–326; the sequence is SSVNSITAFDLISLSSGLDLSGLFE. The interval 330 to 363 is PPI; sequence KKERRFTAKVSGVEVEEKAKMIGEKLGYVVKKKM.

This sequence belongs to the protein kinase superfamily. CAMK Ser/Thr protein kinase family. SNF1 subfamily. Interacts with CBL1, CBL2 and CBL3. The cofactor is Mn(2+). Post-translationally, autophosphorylated. Strongly expressed in leaves, but barely expressed in roots, stems or flowers.

It catalyses the reaction L-seryl-[protein] + ATP = O-phospho-L-seryl-[protein] + ADP + H(+). The catalysed reaction is L-threonyl-[protein] + ATP = O-phospho-L-threonyl-[protein] + ADP + H(+). In terms of biological role, CIPK serine-threonine protein kinases interact with CBL proteins. Binding of a CBL protein to the regulatory NAF domain of CIPK protein lead to the activation of the kinase in a calcium-dependent manner. Phosphorylates the rice sucrose synthase (SuSy) in vitro in an allosteric manner. Involved in cold response. This Arabidopsis thaliana (Mouse-ear cress) protein is CBL-interacting serine/threonine-protein kinase 7 (CIPK7).